Reading from the N-terminus, the 260-residue chain is Carbonic anhydrase 3 (260 aa).

At alanine 2 the chain carries N-acetylalanine. Residues 3 to 259 form the Alpha-carbonic anhydrase domain; that stretch reads KEWGYADHNG…LKGRVVRASF (257 aa). Phosphoserine is present on residues serine 29, serine 43, serine 50, and serine 55. Residues 64–67 are involved in proton transfer; the sequence is RTCR. A Phosphothreonine modification is found at threonine 73. Residues histidine 94, histidine 96, and histidine 119 each contribute to the Zn(2+) site. Position 127 is a phosphotyrosine (tyrosine 127). Phosphothreonine is present on residues threonine 129 and threonine 176. 2 positions are modified to S-glutathionyl cysteine: cysteine 182 and cysteine 187. Residue 198 to 199 coordinates substrate; sequence TT. Residue threonine 216 is modified to Phosphothreonine. Residue serine 219 is modified to Phosphoserine.

This sequence belongs to the alpha-carbonic anhydrase family. Zn(2+) serves as cofactor. Post-translationally, S-thiolated both by thiol-disulfide exchange with glutathione disulfide and by oxyradical-initiated S-thiolation with reduced glutathione. S-glutathionylated in hepatocytes under oxidative stress.

The protein resides in the cytoplasm. It catalyses the reaction hydrogencarbonate + H(+) = CO2 + H2O. Inhibited by acetazolamide. In terms of biological role, reversible hydration of carbon dioxide. The sequence is that of Carbonic anhydrase 3 (CA3) from Equus caballus (Horse).